We begin with the raw amino-acid sequence, 158 residues long: Transcriptional regulator MraZ (158 aa).

SpoVT-AbrB domains are found at residues 7–57 (THQN…PTAA) and 86–129 (AYPV…EPAA). The segment at 133-158 (RRAEARTRSRQLALPAQGRRQGGADA) is disordered.

The protein belongs to the MraZ family. Forms oligomers.

It localises to the cytoplasm. The protein localises to the nucleoid. In Gluconacetobacter diazotrophicus (strain ATCC 49037 / DSM 5601 / CCUG 37298 / CIP 103539 / LMG 7603 / PAl5), this protein is Transcriptional regulator MraZ.